Here is a 56-residue protein sequence, read N- to C-terminus: MAKKNKNVLVRLVSTAGTGVFWVKKRNPRTQTEKLSFRKYDKVVRKHVLFKEEKIK.

This sequence belongs to the bacterial ribosomal protein bL33 family.

The protein is Large ribosomal subunit protein bL33 (rpmG) of Rickettsia prowazekii (strain Madrid E).